We begin with the raw amino-acid sequence, 439 residues long: Glutamine synthetase (439 aa).

Residues serine 12–lysine 93 form the GS beta-grasp domain. The region spanning proline 99–leucine 439 is the GS catalytic domain. Mg(2+) contacts are provided by glutamate 122 and glutamate 124. Glutamate 172 provides a ligand contact to ATP. 2 residues coordinate Mg(2+): glutamate 177 and glutamate 184. Position 229 (glycine 229) interacts with L-glutamate. Residue histidine 233 participates in Mg(2+) binding. ATP contacts are provided by residues histidine 235–serine 237 and serine 237. L-glutamate-binding residues include arginine 283, glutamate 289, and arginine 301. Residues arginine 301, arginine 306, and lysine 313 each contribute to the ATP site. Residue glutamate 318 coordinates Mg(2+). L-glutamate is bound at residue arginine 320.

It belongs to the glutamine synthetase family. As to quaternary structure, oligomer of 12 subunits arranged in the form of two hexagons. Mg(2+) is required as a cofactor.

It is found in the cytoplasm. The catalysed reaction is L-glutamate + NH4(+) + ATP = L-glutamine + ADP + phosphate + H(+). In terms of biological role, probably involved in nitrogen metabolism via ammonium assimilation. Catalyzes the ATP-dependent biosynthesis of glutamine from glutamate and ammonia. This is Glutamine synthetase from Pyrococcus woesei.